We begin with the raw amino-acid sequence, 588 residues long: Outer membrane transporter CdiB (588 aa).

A helical transmembrane segment spans residues 33 to 55 (VVRYFSLLPCLCILSFSSPAAML). The region spanning 104-179 (FTVSRIVVSG…GVLHITVMEG (76 aa)) is the POTRA domain.

The protein belongs to the TPS (TC 1.B.20) family.

The protein localises to the cell outer membrane. In terms of biological role, potential outer membrane protein component of a toxin-immunity protein module, which functions as a cellular contact-dependent growth inhibition (CDI) system. CDI modules allow bacteria to communicate with and inhibit the growth of closely related neighboring bacteria in a contact-dependent fashion. This protein may be required for secretion and assembly of the CdiA toxin protein. Its function is as follows. Probable member of a two partner secretion pathway (TPS) in which it mediates the secretion of CdiA. The polypeptide is Outer membrane transporter CdiB (Escherichia coli O6:K15:H31 (strain 536 / UPEC)).